The following is a 250-amino-acid chain: Proteasome subunit alpha type-4 (250 aa).

It belongs to the peptidase T1A family. As to quaternary structure, the 26S proteasome consists of a 20S proteasome core and two 19S regulatory subunits. The 20S proteasome core is composed of 28 subunits that are arranged in four stacked rings, resulting in a barrel-shaped structure. The two end rings are each formed by seven alpha subunits, and the two central rings are each formed by seven beta subunits. The catalytic chamber with the active sites is on the inside of the barrel.

It localises to the cytoplasm. The protein localises to the nucleus. Functionally, the proteasome is a multicatalytic proteinase complex which is characterized by its ability to cleave peptides with Arg, Phe, Tyr, Leu, and Glu adjacent to the leaving group at neutral or slightly basic pH. The proteasome has an ATP-dependent proteolytic activity. The sequence is that of Proteasome subunit alpha type-4 (psmA4) from Dictyostelium discoideum (Social amoeba).